Consider the following 265-residue polypeptide: MALQIPSLLLSAAVVVLMVLSSPRTEGGNSERHFVVQFKGECYYTNGTQRIRLVTRYIYNREEYVRYDSDVGEYRAVTELGRPDAEYWNSQPEILERTRAEVDTACRHNYEGPETSTSLRRLEQPNVAISLSRTEALNHHNTLVCSVTDFYPAKIKVRWFRNGQEETVGVSSTQLIRNGDWTFQVLVMLEMTPHQGEVYTCHVEHPSLKSPITVEWRAQSESARSKMLSGIGGCVLGVIFLGLGLFIRHRSQKGPRGPPPAGLLQ.

Positions 1 to 27 are cleaved as a signal peptide; sequence MALQIPSLLLSAAVVVLMVLSSPRTEG. The segment at 28–122 is beta-1; the sequence is GNSERHFVVQ…PETSTSLRRL (95 aa). Topologically, residues 28-226 are extracellular; that stretch reads GNSERHFVVQ…RAQSESARSK (199 aa). Disulfide bonds link C42–C106 and C145–C201. N46 is a glycosylation site (N-linked (GlcNAc...) asparagine). The segment at 123–216 is beta-2; it reads EQPNVAISLS…SLKSPITVEW (94 aa). The Ig-like C1-type domain maps to 125-213; the sequence is PNVAISLSRT…EHPSLKSPIT (89 aa). Positions 217–226 are connecting peptide; the sequence is RAQSESARSK. A helical membrane pass occupies residues 227-247; the sequence is MLSGIGGCVLGVIFLGLGLFI. Residues 248-265 are Cytoplasmic-facing; the sequence is RHRSQKGPRGPPPAGLLQ.

This sequence belongs to the MHC class II family. Ubiquitinated in immature dendritic cells leading to down-regulation of MHC class II.

Its subcellular location is the membrane. This chain is H-2 class II histocompatibility antigen, A-D beta chain (H2-Ab1), found in Mus musculus (Mouse).